A 326-amino-acid chain; its full sequence is NAD-dependent protein deacylase SIR5 (326 aa).

The transit peptide at 1-26 (MRLLRPTPRLSSIFSSKTATSNLRFF) directs the protein to the mitochondrion. Positions 28 to 324 (AMAPHNDVGA…IGKLETDKKE (297 aa)) constitute a Deacetylase sirtuin-type domain. Residue 53–72 (GAGLSASSGLPTFRGAGGLW) participates in NAD(+) binding. Positions 97 and 100 each coordinate substrate. Catalysis depends on His151, which acts as the Proton acceptor. Cys159, Cys162, Cys211, and Cys214 together coordinate Zn(2+).

Belongs to the sirtuin family. Class I subfamily. In terms of assembly, interacts with LAT1; the interaction is direct. The cofactor is Zn(2+).

The protein localises to the mitochondrion. Its subcellular location is the cytoplasm. It localises to the cytosol. It is found in the nucleus. The protein resides in the chromosome. It catalyses the reaction N(6)-acetyl-L-lysyl-[protein] + NAD(+) + H2O = 2''-O-acetyl-ADP-D-ribose + nicotinamide + L-lysyl-[protein]. The enzyme catalyses N(6)-(2E)-butenoyl-L-lysyl-[protein] + H2O = (2E)-2-butenoate + L-lysyl-[protein]. In terms of biological role, NAD-dependent protein-lysine deacylase that decrotonylates the PDC (pyruvate dehydrogenase complex) subunit LAT1 at 'Lys-148' to inhibit PDC activity and consequently ATP production. Also decrotonylates histone H3 crotonylated at 'Lys-18' (H3K18cr), to repress the expression of genes involved in aerobic respiration. May also act as a NAD-dependent deacetylase. Does not mediate desuccinylation, demalonylation, or deglutarylation of LAT1. This chain is NAD-dependent protein deacylase SIR5, found in Fusarium oxysporum f. sp. lycopersici (strain 4287 / CBS 123668 / FGSC 9935 / NRRL 34936) (Fusarium vascular wilt of tomato).